Reading from the N-terminus, the 298-residue chain is Protein REVEILLE 8 (298 aa).

The disordered stretch occupies residues 1–44 (MSSSPSRNPTNAEAPPPPPTSTDAVAEGSSKKVRKPYTITKSRE). The HTH myb-type domain maps to 38-92 (TITKSRESWTEEEHDKFLEALQLFDRDWKKIEDFVGSKTVIQIRSHAQKYFLKVQ). Residues 65–88 (WKKIEDFVGSKTVIQIRSHAQKYF) constitute a DNA-binding region (H-T-H motif). Positions 96 to 123 (TLAHVPPPRPKRKAAHPYPQKASKNAQM) are disordered.

It localises to the nucleus. Functionally, transcriptional activator of evening element (EE)-containing clock-controlled genes. Forms a negative feedback loop with APRR5. Regulates the pattern of histone H3 acetylation of the TOC1 promoter. RVE4, RVE6 and RVE8 are components of the circadian system acting synergistically to regulate flowering time, redundantly to regulate leaf growth, and antagonistically to regulate hypocotyl elongation; their action seems independent of ZTL and HY5. The chain is Protein REVEILLE 8 from Arabidopsis thaliana (Mouse-ear cress).